The chain runs to 566 residues: MSSRKGTRSSRIVTLERSANSSLSNNGGGDDSFGSTLLETSRLQEKDHLTSLNSRLATYIDKVRQLEQENNRLQVQIRDIEVVEKKEKSNLADRFEAEKARLRRALDSAQDELAKYRIEYDAAKVEVKKLKPQVEKLERELAGAEEQALHAQSIADQSQAKQKTLQARNDKLVVENDDLKKQNITLRDTVEGLKKAVEDETLLRTAANNKIKALEEDLAFALQQHKGELEEVRHKRQVDMTTYAKQINDEYQSKLQDQIEEMRAQFKNNLHQNKTAFEDAYKNKLNAARERQEEAVSEAIHLRARVRDLETSSSGNASLIERLRSELDTLKRSFQEKLDDKDARIAELNQEIERMMSEFHDLLDVKIQLDAELKTYQALLEGEEERLNLTQEAPQNTSVHHVSFSSGGASAQRGVKRRRVVDVNGEDQDIDYLNRRSKLNKETVGPVGIDEVDEEGKWVRVANNSEEEQSIGGYKLVVKAGNKEASFQFSSRMKLAPHASATVWSADAGAVHHPPEVYVMKKQQWPIGDNPSARLEDSEGDTVSSITVEFSESSDPSDPADRCSIM.

The segment at 1–37 is disordered; sequence MSSRKGTRSSRIVTLERSANSSLSNNGGGDDSFGSTL. Ser-2 bears the N-acetylserine mark. Positions 13–47 are head; it reads VTLERSANSSLSNNGGGDDSFGSTLLETSRLQEKD. In terms of domain architecture, IF rod spans 45–387; that stretch reads EKDHLTSLNS…ALLEGEEERL (343 aa). Positions 48–82 are coil 1A; sequence HLTSLNSRLATYIDKVRQLEQENNRLQVQIRDIEV. A linker 1 region spans residues 83–94; it reads VEKKEKSNLADR. Positions 95 to 228 are coil 1B; sequence FEAEKARLRR…AFALQQHKGE (134 aa). Residues 229 to 256 form a linker 2 region; the sequence is LEEVRHKRQVDMTTYAKQINDEYQSKLQ. The coil 2 stretch occupies residues 257–385; that stretch reads DQIEEMRAQF…YQALLEGEEE (129 aa). Residues 386 to 566 form a tail region; that stretch reads RLNLTQEAPQ…SDPADRCSIM (181 aa). The region spanning 435 to 550 is the LTD domain; that stretch reads RRSKLNKETV…DTVSSITVEF (116 aa). The interval 528–566 is disordered; sequence GDNPSARLEDSEGDTVSSITVEFSESSDPSDPADRCSIM. A compositionally biased stretch (polar residues) spans 541 to 556; the sequence is DTVSSITVEFSESSDP. Cysteine methyl ester is present on Cys-563. A lipid anchor (S-farnesyl cysteine) is attached at Cys-563. Residues 564–566 constitute a propeptide, removed in mature form; that stretch reads SIM.

This sequence belongs to the intermediate filament family. Interacts with LEM domain proteins lem-2 and emr-1. May interact with unc-84; this interaction may be required to complete the connection between the nuclear lamina and the cytoskeleton. Ubiquitous. Expressed in all cells, except in cells undergoing spermatogenesis.

It is found in the nucleus envelope. The protein localises to the nucleus inner membrane. In terms of biological role, major component of the nuclear lamina, a fibrous layer on the nucleoplasmic side of the inner nuclear membrane. Provides a framework for the nuclear envelope and probably also interacts with chromatin. Essential to maintain the shape and integrity of the nucleus, and for DNA replication. Involved in spatial organization of nuclear pore complexes. It is not a target for ced-3 during apoptosis, suggesting that lamin cleavage is not essential for apoptosis in C.elegans. This Caenorhabditis elegans protein is Lamin-1.